The chain runs to 111 residues: Large ribosomal subunit protein uL24 (111 aa).

The protein belongs to the universal ribosomal protein uL24 family. As to quaternary structure, part of the 50S ribosomal subunit.

Its function is as follows. One of two assembly initiator proteins, it binds directly to the 5'-end of the 23S rRNA, where it nucleates assembly of the 50S subunit. In terms of biological role, one of the proteins that surrounds the polypeptide exit tunnel on the outside of the subunit. The polypeptide is Large ribosomal subunit protein uL24 (Chlamydia pneumoniae (Chlamydophila pneumoniae)).